The sequence spans 86 residues: ATP synthase subunit c (86 aa).

2 consecutive transmembrane segments (helical) span residues A4 to A24 and V57 to V77.

This sequence belongs to the ATPase C chain family. In terms of assembly, F-type ATPases have 2 components, F(1) - the catalytic core - and F(0) - the membrane proton channel. F(1) has five subunits: alpha(3), beta(3), gamma(1), delta(1), epsilon(1). F(0) has three main subunits: a(1), b(2) and c(10-14). The alpha and beta chains form an alternating ring which encloses part of the gamma chain. F(1) is attached to F(0) by a central stalk formed by the gamma and epsilon chains, while a peripheral stalk is formed by the delta and b chains.

It localises to the cell membrane. F(1)F(0) ATP synthase produces ATP from ADP in the presence of a proton or sodium gradient. F-type ATPases consist of two structural domains, F(1) containing the extramembraneous catalytic core and F(0) containing the membrane proton channel, linked together by a central stalk and a peripheral stalk. During catalysis, ATP synthesis in the catalytic domain of F(1) is coupled via a rotary mechanism of the central stalk subunits to proton translocation. Functionally, key component of the F(0) channel; it plays a direct role in translocation across the membrane. A homomeric c-ring of between 10-14 subunits forms the central stalk rotor element with the F(1) delta and epsilon subunits. The sequence is that of ATP synthase subunit c from Clostridioides difficile (strain 630) (Peptoclostridium difficile).